The sequence spans 383 residues: Envelope glycoprotein D (383 aa).

The N-terminal stretch at 1–30 is a signal peptide; the sequence is MPAATMATPGYLACRTSVATLLFFVLLRRA. Residues 31-358 lie on the Virion surface side of the membrane; it reads AILGAGGAPS…PKVVGPTVGP (328 aa). Intrachain disulfides connect Cys76/Cys197, Cys115/Cys212, and Cys127/Cys136. The tract at residues 244–311 is profusion; it reads YQDKLKVASP…TSASGVIEIE (68 aa). The interval 315 to 349 is disordered; the sequence is ESDVRLVSYPPPTLPSPGPGGNENGAGYSDNRPDP. Pro residues predominate over residues 323-332; it reads YPPPTLPSPG. The helical transmembrane segment at 359 to 379 threads the bilayer; the sequence is GAIILVVMCAPILIGLTAFTI. At 380–383 the chain is on the intravirion side; the sequence is RKYC.

The protein belongs to the herpesviridae glycoprotein D family.

It localises to the virion membrane. Envelope glycoprotein that binds to host cell entry receptors, promoting the virus entry into host cells. May trigger fusion with host membrane, by recruiting the fusion machinery composed of gB and gH/gL. The sequence is that of Envelope glycoprotein D (US6) from Amazona oratrix (yellow-headed parrot).